Reading from the N-terminus, the 73-residue chain is Translation initiation factor IF-1 (73 aa).

Residues 1 to 72 (MAKEDVIEVE…TKGRITYRFI (72 aa)) form the S1-like domain.

This sequence belongs to the IF-1 family. In terms of assembly, component of the 30S ribosomal translation pre-initiation complex which assembles on the 30S ribosome in the order IF-2 and IF-3, IF-1 and N-formylmethionyl-tRNA(fMet); mRNA recruitment can occur at any time during PIC assembly.

It is found in the cytoplasm. Its function is as follows. One of the essential components for the initiation of protein synthesis. Stabilizes the binding of IF-2 and IF-3 on the 30S subunit to which N-formylmethionyl-tRNA(fMet) subsequently binds. Helps modulate mRNA selection, yielding the 30S pre-initiation complex (PIC). Upon addition of the 50S ribosomal subunit IF-1, IF-2 and IF-3 are released leaving the mature 70S translation initiation complex. The protein is Translation initiation factor IF-1 of Lactobacillus johnsonii (strain CNCM I-12250 / La1 / NCC 533).